A 255-amino-acid chain; its full sequence is MAVTVGVICAIPQELAYLRGVLVDAKRQQVAQILFDSGQLDAHRVVLAAAGMGKVNTGLTATLLADRFGCRTIVFTGVAGGLDPELCIGDIVIADRVVQHDFGLLTDERLRPYQPGHIPFIEPTERLGYPVDPAVIDRVKHRLDGFTLAPLSTAAGGGGRQPRIYYGTILTGDQYLHCERTRNRLHHELGGMAVEMEGGAVAQICASFDIPWLVIRALSDLAGADSGVDFNRFVGEVAASSARVLLRLLPVLTAC.

The Proton acceptor role is filled by Glu14. Substrate contacts are provided by residues Gly80, Leu176, and 196 to 197; that span reads ME. The active-site Proton donor is the Asp220.

Belongs to the PNP/UDP phosphorylase family. MtnN subfamily.

The catalysed reaction is S-adenosyl-L-homocysteine + H2O = S-(5-deoxy-D-ribos-5-yl)-L-homocysteine + adenine. It catalyses the reaction S-methyl-5'-thioadenosine + H2O = 5-(methylsulfanyl)-D-ribose + adenine. The enzyme catalyses 5'-deoxyadenosine + H2O = 5-deoxy-D-ribose + adenine. It functions in the pathway amino-acid biosynthesis; L-methionine biosynthesis via salvage pathway; S-methyl-5-thio-alpha-D-ribose 1-phosphate from S-methyl-5'-thioadenosine (hydrolase route): step 1/2. In terms of biological role, catalyzes the irreversible cleavage of the glycosidic bond in both 5'-methylthioadenosine (MTA) and S-adenosylhomocysteine (SAH/AdoHcy) to adenine and the corresponding thioribose, 5'-methylthioribose and S-ribosylhomocysteine, respectively. Also cleaves 5'-deoxyadenosine, a toxic by-product of radical S-adenosylmethionine (SAM) enzymes, into 5-deoxyribose and adenine. The protein is 5'-methylthioadenosine/S-adenosylhomocysteine nucleosidase (mtnN) of Mycobacterium bovis (strain ATCC BAA-935 / AF2122/97).